The following is a 1026-amino-acid chain: Multidrug resistance protein MdtC (1026 aa).

11 helical membrane passes run 15–35, 333–353, 360–380, 387–407, 431–451, 463–483, 528–548, 853–873, 897–917, 953–973, and 984–1004; these read ILIAAAITLCGILGFRLLPVA, EVEETLAISVALVILVVFLFL, LIPAVAVPVSLIGTFAAMYLC, LSLMALTIATGFVVDDAIVVL, VGFTVISMSLSLVAVFLPLLL, FAVTLSVAIGISLVVSLTLTP, LVGVVFLGTVALNIWLYIAIP, LILIVAAIATVYIVLGILYES, LFNAPFSLIALIGIMLLIGIV, PIMMTTLAALFGALPLVLSGG, and ITIVGGLVMSQLLTLYTTPVV.

Belongs to the resistance-nodulation-cell division (RND) (TC 2.A.6) family. MdtC subfamily. As to quaternary structure, part of a tripartite efflux system composed of MdtA, MdtB and MdtC. MdtC forms a heteromultimer with MdtB.

It is found in the cell inner membrane. This is Multidrug resistance protein MdtC from Salmonella gallinarum (strain 287/91 / NCTC 13346).